The following is a 261-amino-acid chain: Cytochrome c oxidase subunit 3 (261 aa).

Residues 1–15 lie on the Mitochondrial matrix side of the membrane; the sequence is MAHQAHSYHMVDPSP. Residues 16–34 form a helical membrane-spanning segment; that stretch reads WPIFGATAALLTTSGLIMW. Residues 35 to 40 lie on the Mitochondrial intermembrane side of the membrane; it reads FHYNSL. Residues 41–66 form a helical membrane-spanning segment; that stretch reads YLLTLGLLSMFLVMIQWWRDIVREST. Over 67 to 72 the chain is Mitochondrial matrix; the sequence is FQGHHT. Residues 73 to 105 form a helical membrane-spanning segment; that stretch reads PTVQKGLRYGMILFITSEAFFFLGFFWAFFHSS. Over 106-128 the chain is Mitochondrial intermembrane; the sequence is LAPTPELGAQWPPTGINPLNPLE. The helical transmembrane segment at 129 to 152 threads the bilayer; sequence VPLLNTAILLASGVTVTWAHHSIT. Residues 153 to 155 are Mitochondrial matrix-facing; that stretch reads ESN. The helical transmembrane segment at 156–183 threads the bilayer; the sequence is RKQAIHALSLTIILGFYFTALQAMEYHE. Residues 184–190 lie on the Mitochondrial intermembrane side of the membrane; sequence ASFSIAD. A helical membrane pass occupies residues 191–223; that stretch reads GVYGSTFFVATGFHGLHVIIGSSFLTVCLLRLI. Residues 224-232 are Mitochondrial matrix-facing; it reads KFHFTTNHH. A helical transmembrane segment spans residues 233–256; it reads FGFEAAAWYWHFVDVIWLFLYMSI. Over 257-261 the chain is Mitochondrial intermembrane; sequence YWWGS.

This sequence belongs to the cytochrome c oxidase subunit 3 family. Component of the cytochrome c oxidase (complex IV, CIV), a multisubunit enzyme composed of 14 subunits. The complex is composed of a catalytic core of 3 subunits MT-CO1, MT-CO2 and MT-CO3, encoded in the mitochondrial DNA, and 11 supernumerary subunits COX4I, COX5A, COX5B, COX6A, COX6B, COX6C, COX7A, COX7B, COX7C, COX8 and NDUFA4, which are encoded in the nuclear genome. The complex exists as a monomer or a dimer and forms supercomplexes (SCs) in the inner mitochondrial membrane with NADH-ubiquinone oxidoreductase (complex I, CI) and ubiquinol-cytochrome c oxidoreductase (cytochrome b-c1 complex, complex III, CIII), resulting in different assemblies (supercomplex SCI(1)III(2)IV(1) and megacomplex MCI(2)III(2)IV(2)).

It localises to the mitochondrion inner membrane. It catalyses the reaction 4 Fe(II)-[cytochrome c] + O2 + 8 H(+)(in) = 4 Fe(III)-[cytochrome c] + 2 H2O + 4 H(+)(out). In terms of biological role, component of the cytochrome c oxidase, the last enzyme in the mitochondrial electron transport chain which drives oxidative phosphorylation. The respiratory chain contains 3 multisubunit complexes succinate dehydrogenase (complex II, CII), ubiquinol-cytochrome c oxidoreductase (cytochrome b-c1 complex, complex III, CIII) and cytochrome c oxidase (complex IV, CIV), that cooperate to transfer electrons derived from NADH and succinate to molecular oxygen, creating an electrochemical gradient over the inner membrane that drives transmembrane transport and the ATP synthase. Cytochrome c oxidase is the component of the respiratory chain that catalyzes the reduction of oxygen to water. Electrons originating from reduced cytochrome c in the intermembrane space (IMS) are transferred via the dinuclear copper A center (CU(A)) of subunit 2 and heme A of subunit 1 to the active site in subunit 1, a binuclear center (BNC) formed by heme A3 and copper B (CU(B)). The BNC reduces molecular oxygen to 2 water molecules using 4 electrons from cytochrome c in the IMS and 4 protons from the mitochondrial matrix. The protein is Cytochrome c oxidase subunit 3 (MT-CO3) of Struthio camelus (Common ostrich).